The primary structure comprises 476 residues: Neuropeptide receptor 18 (476 aa).

The Extracellular portion of the chain corresponds to 1 to 61; it reads MSSFYNEAKF…LSNHDNSSLM (61 aa). 2 N-linked (GlcNAc...) asparagine glycosylation sites follow: Asn-43 and Asn-57. A helical transmembrane segment spans residues 62 to 82; that stretch reads LIAGFYALLFMFGTCGNAAIL. Residues 83–102 are Cytoplasmic-facing; that stretch reads AVVHHVKGQDPRSRHNTTLT. A helical membrane pass occupies residues 103-123; that stretch reads YICILSIVDFLSMLPIPMTII. The Extracellular portion of the chain corresponds to 124–139; sequence DQILGFWMFDTFACKL. A disulfide bridge connects residues Cys-137 and Cys-228. The helical transmembrane segment at 140–160 threads the bilayer; it reads FRLLEHIGKIFSTFILVAFSI. At 161–179 the chain is on the cytoplasmic side; that stretch reads DRYCAVCHPLQVRVRNQRT. A helical transmembrane segment spans residues 180–200; sequence VFVFLGIMFFVTCVMLSPILL. Over 201–236 the chain is Extracellular; sequence YAHSKELVMHEKVDLDQEVITRMHLYKCVDDLGREL. The chain crosses the membrane as a helical span at residues 237 to 257; the sequence is FVVFTLYSFVLAYLMPLLFMI. The Cytoplasmic portion of the chain corresponds to 258–291; it reads YFYYEMLIRLFKQANVIKQTLVGRRSGGEEKKLT. Residues 292 to 312 form a helical membrane-spanning segment; that stretch reads IPVGHIAIYTLAICSFHFICW. Residues 313 to 334 are Extracellular-facing; that stretch reads TPYWISILYSLYEELYQDTKST. Residues 335-355 form a helical membrane-spanning segment; it reads ASPPTYAFIYFMYGVHALPYI. The Cytoplasmic portion of the chain corresponds to 356-476; it reads NSASNFILYG…ITPDTESVIL (121 aa).

Belongs to the G-protein coupled receptor 1 family. In terms of tissue distribution, expressed in sensory neurons including ASER.

The protein resides in the cell membrane. Its function is as follows. Probable receptor for neuropeptide ligand nlp-9 that plays a role in octopamine signaling and specifically, the octapamine inhibition of aversion responses in olfactory sensory neurons. In AWB olfactory sensory neurons, required for the detection of preferred food sources. This is Neuropeptide receptor 18 from Caenorhabditis elegans.